Reading from the N-terminus, the 369-residue chain is MKKEKKDYYEILGVPRDATQEEIKRAYKRLVKEWHPDRHPENRKEAEQRFKEIQEAYEVLSDPQKRAMYDRFGYVGEQPTYQETESGGFFDDIFREFENIFNRDIFDVFFGERPHQEERREYARRGEDIRYEIEVTLSDLINGAEIPVEYERYETCPRCGGTGVEPNAGYINCPSCGGTGRIREERRSFFGYFVSERTCERCGGTGKIPREYCHECGGSGRVLRKVRKTVKIPPNVEDGTQLRITGGGNAGYYGGPYGDLIVIVRVKPDPRFKKSGSDLVYDITIDYLQAILGTTVEVPLPEGGTTMLKIPPGTQPETVFRLKGKGLPNRYGRRGDLIVNVHVEIPKSLSREERKVLEELAKKRGVTID.

Positions D7 to G73 constitute a J domain. A CR-type zinc finger spans residues G143–K225. 8 residues coordinate Zn(2+): C156, C159, C173, C176, C199, C202, C213, and C216. 4 CXXCXGXG motif repeats span residues C156–G163, C173–G180, C199–G206, and C213–G220.

The protein belongs to the DnaJ family. In terms of assembly, homodimer. Zn(2+) is required as a cofactor.

The protein localises to the cytoplasm. Functionally, participates actively in the response to hyperosmotic and heat shock by preventing the aggregation of stress-denatured proteins and by disaggregating proteins, also in an autonomous, DnaK-independent fashion. Unfolded proteins bind initially to DnaJ; upon interaction with the DnaJ-bound protein, DnaK hydrolyzes its bound ATP, resulting in the formation of a stable complex. GrpE releases ADP from DnaK; ATP binding to DnaK triggers the release of the substrate protein, thus completing the reaction cycle. Several rounds of ATP-dependent interactions between DnaJ, DnaK and GrpE are required for fully efficient folding. Also involved, together with DnaK and GrpE, in the DNA replication of plasmids through activation of initiation proteins. This chain is Chaperone protein DnaJ, found in Thermotoga sp. (strain RQ2).